Reading from the N-terminus, the 245-residue chain is Platelet-derived growth factor subunit B (245 aa).

Positions 1–20 (MNRCWALFLSLCCYLRLVSA) are cleaved as a signal peptide. Residues 21 to 81 (EGDPIPEELY…ELESLSRGRR (61 aa)) constitute a propeptide, removed in mature form. A glycan (N-linked (GlcNAc...) asparagine) is linked at N63. 3 disulfide bridges follow: C101–C145, C134–C182, and C138–C184. A propeptide spans 195–245 (RSPGSSQEQRARTPQTRVTIRTVRVRRPPKGKHQKFKHTHDKKALKETLGA) (removed in mature form). Basic residues predominate over residues 220–235 (RRPPKGKHQKFKHTHD). The tract at residues 220–245 (RRPPKGKHQKFKHTHDKKALKETLGA) is disordered. A compositionally biased stretch (basic and acidic residues) spans 236–245 (KKALKETLGA).

Belongs to the PDGF/VEGF growth factor family. In terms of assembly, antiparallel homodimer; disulfide-linked. Antiparallel heterodimer with PDGFA; disulfide-linked. The PDGFB homodimer interacts with PDGFRA and PDGFRB homodimers, and with heterodimers formed by PDGFRA and PDGFRB. The heterodimer composed of PDGFA and PDGFB interacts with PDGFRB homodimers, and with heterodimers formed by PDGFRA and PDGFRB. Interacts with XLKD1. Interacts with LRP1. Interacts with SORL1 (via the N-terminal ectodomain). Interacts with CD82; this interaction inhibits PDGFB-mediated signaling pathway.

Its subcellular location is the secreted. Functionally, growth factor that plays an essential role in the regulation of embryonic development, cell proliferation, cell migration, survival and chemotaxis. Potent mitogen for cells of mesenchymal origin. Required for normal proliferation and recruitment of pericytes and vascular smooth muscle cells in the central nervous system, skin, lung, heart and placenta. Required for normal blood vessel development, and for normal development of kidney glomeruli. Plays an important role in wound healing. Signaling is modulated by the formation of heterodimers with PDGFA. This is Platelet-derived growth factor subunit B (PDGFB) from Felis catus (Cat).